We begin with the raw amino-acid sequence, 357 residues long: UDP-N-acetylglucosamine--N-acetylmuramyl-(pentapeptide) pyrophosphoryl-undecaprenol N-acetylglucosamine transferase (357 aa).

UDP-N-acetyl-alpha-D-glucosamine contacts are provided by residues 12–14, Asn-124, Arg-162, Ser-190, Ile-244, 263–268, and Gln-289; these read TGG and ALTVAE.

This sequence belongs to the glycosyltransferase 28 family. MurG subfamily.

Its subcellular location is the cell inner membrane. It catalyses the reaction di-trans,octa-cis-undecaprenyl diphospho-N-acetyl-alpha-D-muramoyl-L-alanyl-D-glutamyl-meso-2,6-diaminopimeloyl-D-alanyl-D-alanine + UDP-N-acetyl-alpha-D-glucosamine = di-trans,octa-cis-undecaprenyl diphospho-[N-acetyl-alpha-D-glucosaminyl-(1-&gt;4)]-N-acetyl-alpha-D-muramoyl-L-alanyl-D-glutamyl-meso-2,6-diaminopimeloyl-D-alanyl-D-alanine + UDP + H(+). It functions in the pathway cell wall biogenesis; peptidoglycan biosynthesis. Cell wall formation. Catalyzes the transfer of a GlcNAc subunit on undecaprenyl-pyrophosphoryl-MurNAc-pentapeptide (lipid intermediate I) to form undecaprenyl-pyrophosphoryl-MurNAc-(pentapeptide)GlcNAc (lipid intermediate II). This chain is UDP-N-acetylglucosamine--N-acetylmuramyl-(pentapeptide) pyrophosphoryl-undecaprenol N-acetylglucosamine transferase, found in Alkalilimnicola ehrlichii (strain ATCC BAA-1101 / DSM 17681 / MLHE-1).